Reading from the N-terminus, the 85-residue chain is UPF0291 protein SAK_0343 (85 aa).

Residues 58–85 are disordered; the sequence is GNDVTPEKLRQVQREKGLHGRSLDDPNS. Residues 62 to 85 are compositionally biased toward basic and acidic residues; sequence TPEKLRQVQREKGLHGRSLDDPNS.

The protein belongs to the UPF0291 family.

It is found in the cytoplasm. The protein is UPF0291 protein SAK_0343 of Streptococcus agalactiae serotype Ia (strain ATCC 27591 / A909 / CDC SS700).